Reading from the N-terminus, the 190-residue chain is Elongation factor P 2 (190 aa).

This sequence belongs to the elongation factor P family.

The protein resides in the cytoplasm. It participates in protein biosynthesis; polypeptide chain elongation. In terms of biological role, involved in peptide bond synthesis. Stimulates efficient translation and peptide-bond synthesis on native or reconstituted 70S ribosomes in vitro. Probably functions indirectly by altering the affinity of the ribosome for aminoacyl-tRNA, thus increasing their reactivity as acceptors for peptidyl transferase. This is Elongation factor P 2 (efp2) from Protochlamydia amoebophila (strain UWE25).